The chain runs to 148 residues: Troponin C (148 aa).

4 EF-hand domains span residues 8-43, 44-79, 81-116, and 117-148; these read KQFN…LALH, VSDD…KVQE, EDER…LGDD, and LNDD…LMLG. Ca(2+) is bound by residues D130, D132, S134, T136, and E141.

This sequence belongs to the troponin C family.

Its function is as follows. Troponin is the central regulatory protein of striated muscle contraction. Tn consists of three components: Tn-I which is the inhibitor of actomyosin ATPase, Tn-T which contains the binding site for tropomyosin and Tn-C. The binding of calcium to Tn-C abolishes the inhibitory action of Tn on actin filaments. This Todarodes pacificus (Japanese flying squid) protein is Troponin C.